Reading from the N-terminus, the 603-residue chain is MASASTSKYNSHSLENESIKRTSRDGVNRDLTEAVPRLPGETLITDKEVIYICPFNGPIKGRVYITNYRLYLRSLETDSSLILDVPLGVISRIEKMGGATSRGENSYGLDITCKDMRNLRFALKQEGHSRRDMFEILTRYAFPLAHSLPLFAFLNEEKFNVDGWTVYNPVEEYRRQGLPNHHWRITFINKCYELCDTYPALLVVPYRASDDDLRRVATFRSRNRIPVLSWIHPENKTVIVRCSQPLVGMSGKRNKDDEKYLDVIRETNKQISKLTIYDARPSVNAVANKATGGGYESDDAYHNAELFFLDIHNIHVMRESLKKVKDIVYPNVEESHWLSSLESTHWLEHIKLVLTGAIQVADKVSSGKSSVLVHCSDGWDRTAQLTSLAMLMLDSFYRSIEGFEILVQKEWISFGHKFASRIGHGDKNHTDADRSPIFLQFIDCVWQMSKQFPTAFEFNEQFLIIILDHLYSCRFGTFLFNCESARERQKVTERTVSLWSLINSNKEKFKNPFYTKEINRVLYPVASMRHLELWVNYYIRWNPRIKQQQPNPVEQRYMELLALRDEYIKRLEELQLANSAKLSDPPTSPSSPSQMMPHVQTHF.

Residues 1–13 (MASASTSKYNSHS) are compositionally biased toward polar residues. Residues 1–25 (MASASTSKYNSHSLENESIKRTSRD) are disordered. A phosphoserine mark is found at S13 and S18. A compositionally biased stretch (basic and acidic residues) spans 14-25 (LENESIKRTSRD). One can recognise a GRAM domain in the interval 29–97 (RDLTEAVPRL…GVISRIEKMG (69 aa)). Residues 163 to 538 (GWTVYNPVEE…RHLELWVNYY (376 aa)) enclose the Myotubularin phosphatase domain. The a 1,2-diacyl-sn-glycero-3-phospho-(1D-myo-inositol-3,5-bisphosphate) site is built by N288, N313, and I314. A 1,2-diacyl-sn-glycero-3-phospho-(1D-myo-inositol-3-phosphate) is bound by residues N288, N313, and I314. C375 acts as the Phosphocysteine intermediate in catalysis. A 1,2-diacyl-sn-glycero-3-phospho-(1D-myo-inositol-3,5-bisphosphate) is bound by residues S376, D377, G378, W379, D380, R381, K417, and R421. A 1,2-diacyl-sn-glycero-3-phospho-(1D-myo-inositol-3-phosphate) contacts are provided by S376, D377, G378, W379, D380, and R381. R421 contacts a 1,2-diacyl-sn-glycero-3-phospho-(1D-myo-inositol-3-phosphate). T495 is subject to Phosphothreonine. Residues 579-603 (SAKLSDPPTSPSSPSQMMPHVQTHF) form a disordered region. S588 carries the post-translational modification Phosphoserine.

This sequence belongs to the protein-tyrosine phosphatase family. Non-receptor class myotubularin subfamily. In terms of assembly, heterodimer with MTMR12. Interacts with KMT2A/MLL1 (via SET domain). Interacts with DES in skeletal muscle but not in cardiac muscle. Interacts with SPEG.

It localises to the cytoplasm. The protein localises to the cell membrane. The protein resides in the cell projection. Its subcellular location is the filopodium. It is found in the ruffle. It localises to the late endosome. The protein localises to the myofibril. The protein resides in the sarcomere. It carries out the reaction a 1,2-diacyl-sn-glycero-3-phospho-(1D-myo-inositol-3-phosphate) + H2O = a 1,2-diacyl-sn-glycero-3-phospho-(1D-myo-inositol) + phosphate. It catalyses the reaction a 1,2-diacyl-sn-glycero-3-phospho-(1D-myo-inositol-3,5-bisphosphate) + H2O = a 1,2-diacyl-sn-glycero-3-phospho-(1D-myo-inositol-5-phosphate) + phosphate. The catalysed reaction is 1,2-dioctanoyl-sn-glycero-3-phospho-(1-D-myo-inositol-3-phosphate) + H2O = 1,2-dioctanoyl-sn-glycero-3-phospho-(1D-myo-inositol) + phosphate. The enzyme catalyses 1,2-dioctanoyl-sn-glycero-3-phospho-(1D-myo-inositol-3,5-bisphosphate) + H2O = 1,2-dioctanoyl-sn-glycero-3-phospho-(1D-myo-inositol-5-phosphate) + phosphate. It carries out the reaction 1,2-dihexadecanoyl-sn-glycero-3-phospho-(1D-myo-inositol-3,5-phosphate) + H2O = 1,2-dihexadecanoyl-sn-glycero-3-phospho-(1D-myo-inositol-5-phosphate) + phosphate. Its activity is regulated as follows. Allosterically activated by phosphatidylinositol 5-phosphate (PI5P). Its function is as follows. Lipid phosphatase which dephosphorylates phosphatidylinositol 3-monophosphate (PI3P) and phosphatidylinositol 3,5-bisphosphate (PI(3,5)P2). Has also been shown to dephosphorylate phosphotyrosine- and phosphoserine-containing peptides. Negatively regulates EGFR degradation through regulation of EGFR trafficking from the late endosome to the lysosome. Plays a role in vacuolar formation and morphology. Regulates desmin intermediate filament assembly and architecture. Plays a role in mitochondrial morphology and positioning. Required for skeletal muscle maintenance but not for myogenesis. In skeletal muscles, stabilizes MTMR12 protein levels. The polypeptide is Myotubularin (Homo sapiens (Human)).